We begin with the raw amino-acid sequence, 195 residues long: Molybdenum cofactor guanylyltransferase (195 aa).

GTP is bound by residues 10–12 (LAG), lysine 23, asparagine 51, aspartate 69, and aspartate 99. Aspartate 99 lines the Mg(2+) pocket.

It belongs to the MobA family. Monomer. The cofactor is Mg(2+).

It localises to the cytoplasm. It catalyses the reaction Mo-molybdopterin + GTP + H(+) = Mo-molybdopterin guanine dinucleotide + diphosphate. Its function is as follows. Transfers a GMP moiety from GTP to Mo-molybdopterin (Mo-MPT) cofactor (Moco or molybdenum cofactor) to form Mo-molybdopterin guanine dinucleotide (Mo-MGD) cofactor. This is Molybdenum cofactor guanylyltransferase from Shewanella putrefaciens (strain CN-32 / ATCC BAA-453).